The primary structure comprises 447 residues: Argininosuccinate synthase (447 aa).

ATP-binding positions include 17–25 (AFSGGLDTS) and A43. Position 99 (Y99) interacts with L-citrulline. The ATP site is built by G129 and T131. Positions 131, 135, and 136 each coordinate L-aspartate. L-citrulline is bound at residue N135. D136 is a binding site for ATP. L-citrulline contacts are provided by R139 and S192. D194 contributes to the ATP binding site. L-citrulline-binding residues include T201, E203, and E280.

It belongs to the argininosuccinate synthase family. Type 2 subfamily. As to quaternary structure, homotetramer.

The protein resides in the cytoplasm. The catalysed reaction is L-citrulline + L-aspartate + ATP = 2-(N(omega)-L-arginino)succinate + AMP + diphosphate + H(+). It participates in amino-acid biosynthesis; L-arginine biosynthesis; L-arginine from L-ornithine and carbamoyl phosphate: step 2/3. The polypeptide is Argininosuccinate synthase (Escherichia coli (strain K12 / MC4100 / BW2952)).